A 156-amino-acid chain; its full sequence is ATP synthase subunit b (156 aa).

Residues 12 to 32 form a helical membrane-spanning segment; the sequence is VAFLIFVLFCMKYVWPPVITA.

This sequence belongs to the ATPase B chain family. As to quaternary structure, F-type ATPases have 2 components, F(1) - the catalytic core - and F(0) - the membrane proton channel. F(1) has five subunits: alpha(3), beta(3), gamma(1), delta(1), epsilon(1). F(0) has three main subunits: a(1), b(2) and c(10-14). The alpha and beta chains form an alternating ring which encloses part of the gamma chain. F(1) is attached to F(0) by a central stalk formed by the gamma and epsilon chains, while a peripheral stalk is formed by the delta and b chains.

It is found in the cell inner membrane. Its function is as follows. F(1)F(0) ATP synthase produces ATP from ADP in the presence of a proton or sodium gradient. F-type ATPases consist of two structural domains, F(1) containing the extramembraneous catalytic core and F(0) containing the membrane proton channel, linked together by a central stalk and a peripheral stalk. During catalysis, ATP synthesis in the catalytic domain of F(1) is coupled via a rotary mechanism of the central stalk subunits to proton translocation. Functionally, component of the F(0) channel, it forms part of the peripheral stalk, linking F(1) to F(0). The protein is ATP synthase subunit b of Pseudomonas putida (strain ATCC 47054 / DSM 6125 / CFBP 8728 / NCIMB 11950 / KT2440).